A 453-amino-acid chain; its full sequence is Phosphoglucosamine mutase (453 aa).

Ser110 (phosphoserine intermediate) is an active-site residue. Positions 110, 248, 250, and 252 each coordinate Mg(2+). Residue Ser110 is modified to Phosphoserine.

The protein belongs to the phosphohexose mutase family. It depends on Mg(2+) as a cofactor. In terms of processing, activated by phosphorylation.

The enzyme catalyses alpha-D-glucosamine 1-phosphate = D-glucosamine 6-phosphate. Its function is as follows. Catalyzes the conversion of glucosamine-6-phosphate to glucosamine-1-phosphate. The polypeptide is Phosphoglucosamine mutase (Mycolicibacterium smegmatis (strain ATCC 700084 / mc(2)155) (Mycobacterium smegmatis)).